A 392-amino-acid chain; its full sequence is 1-deoxy-D-xylulose 5-phosphate reductoisomerase (392 aa).

7 residues coordinate NADPH: Thr-14, Gly-15, Ser-16, Ile-17, Gly-40, Gln-43, and Asn-126. Lys-127 provides a ligand contact to 1-deoxy-D-xylulose 5-phosphate. Glu-128 lines the NADPH pocket. Asp-150 is a binding site for Mn(2+). 1-deoxy-D-xylulose 5-phosphate is bound by residues Ser-151, Glu-152, Ser-176, and His-199. Glu-152 is a Mn(2+) binding site. An NADPH-binding site is contributed by Gly-205. 4 residues coordinate 1-deoxy-D-xylulose 5-phosphate: Ser-212, Asn-217, Lys-218, and Glu-221. Glu-221 lines the Mn(2+) pocket.

The protein belongs to the DXR family. Mg(2+) is required as a cofactor. Mn(2+) serves as cofactor.

It catalyses the reaction 2-C-methyl-D-erythritol 4-phosphate + NADP(+) = 1-deoxy-D-xylulose 5-phosphate + NADPH + H(+). The protein operates within isoprenoid biosynthesis; isopentenyl diphosphate biosynthesis via DXP pathway; isopentenyl diphosphate from 1-deoxy-D-xylulose 5-phosphate: step 1/6. Catalyzes the NADPH-dependent rearrangement and reduction of 1-deoxy-D-xylulose-5-phosphate (DXP) to 2-C-methyl-D-erythritol 4-phosphate (MEP). The protein is 1-deoxy-D-xylulose 5-phosphate reductoisomerase of Corynebacterium glutamicum (strain ATCC 13032 / DSM 20300 / JCM 1318 / BCRC 11384 / CCUG 27702 / LMG 3730 / NBRC 12168 / NCIMB 10025 / NRRL B-2784 / 534).